A 969-amino-acid polypeptide reads, in one-letter code: Protein translocase subunit SecA (969 aa).

ATP is bound by residues glutamine 99, 117–121 (GEGKT), and aspartate 631.

This sequence belongs to the SecA family. Monomer and homodimer. Part of the essential Sec protein translocation apparatus which comprises SecA, SecYEG and auxiliary proteins SecDF. Other proteins may also be involved.

Its subcellular location is the cell inner membrane. The protein localises to the cytoplasm. It carries out the reaction ATP + H2O + cellular proteinSide 1 = ADP + phosphate + cellular proteinSide 2.. In terms of biological role, part of the Sec protein translocase complex. Interacts with the SecYEG preprotein conducting channel. Has a central role in coupling the hydrolysis of ATP to the transfer of proteins into and across the cell membrane, serving as an ATP-driven molecular motor driving the stepwise translocation of polypeptide chains across the membrane. This chain is Protein translocase subunit SecA, found in Chlamydia trachomatis serovar L2 (strain ATCC VR-902B / DSM 19102 / 434/Bu).